A 461-amino-acid polypeptide reads, in one-letter code: Cyclic AMP-responsive element-binding protein 3-like protein 3 (461 aa).

Topologically, residues 1 to 322 are cytoplasmic; sequence MNTDLAAGKM…STSKSAQTGT (322 aa). Residues 51 to 120 form a disordered region; the sequence is DQQVLPNPDS…AGCHPAQPGK (70 aa). Low complexity predominate over residues 63–85; sequence FLSSILGSGDSLPSSPLWSPEGS. A Phosphoserine modification is found at Ser173. Positions 243 to 306 constitute a bZIP domain; it reads VLKKIRRKIR…LSLLEQLKKL (64 aa). The tract at residues 245 to 274 is basic motif; sequence KKIRRKIRNKQSAQESRKKKKEYIDGLETR. The segment at 285 to 306 is leucine-zipper; the sequence is LQRKVLHLEKQNLSLLEQLKKL. Lys294 participates in a covalent cross-link: Glycyl lysine isopeptide (Lys-Gly) (interchain with G-Cter in ubiquitin). A helical; Signal-anchor for type II membrane protein transmembrane segment spans residues 323-343; it reads CVAVLLLSFALIILPSISPFG. At 344–461 the chain is on the lumenal side; it reads PNKTESPGDF…AGLEAAGDEL (118 aa). Residues 370-408 are disordered; the sequence is RVAADAVPGSEAPGPRPEADTTREESPGSPGADWGFQDT. O-linked (GalNAc...) serine glycosylation is present at Ser379. Residues 386-395 show a composition bias toward basic and acidic residues; it reads PEADTTREES. Residues Asn410, Asn413, Asn420, and Asn427 are each glycosylated (N-linked (GlcNAc...) asparagine). The tract at residues 442-461 is disordered; sequence APGPSTGSGRAGLEAAGDEL.

It belongs to the bZIP family. ATF subfamily. In terms of assembly, binds DNA as a dimer. May form homodimers. Interacts with ATF6. Interacts with SYNV1/HRD1; this interaction leads to CREB3L3 ubiquitination and proteasomal degradation. Post-translationally, controlled by regulated intramembrane proteolysis (RIP). Following ER stress a fragment containing the cytoplasmic transcription factor domain is released by proteolysis. The cleavage seems to be performed sequentially by site-1 and site-2 proteases (PS1 and PS2). In terms of processing, N- and O-glycosylated. N-glycosylation is required for optimal proteolytic activation. O-glycosylated with core 1 or possibly core 8 glycans. Ubiquitinated at Lys-294 by SYNV1/HRD1 via 'Lys-27'-linked ubiquitin. Exclusively expressed in liver. Underexpressed in hepatocellular carcinoma tissues.

The protein resides in the endoplasmic reticulum membrane. The protein localises to the nucleus. Transcription factor that may act during endoplasmic reticulum stress by activating unfolded protein response target genes. Activated in response to cAMP stimulation. In vitro, binds to the cAMP response element (CRE) and box-B element. Activates transcription through box-B element. Activates transcription through CRE. May function synergistically with ATF6. In acute inflammatory response, may activate expression of acute phase response (APR) genes. May be involved in growth suppression. Regulates FGF21 transcription. Plays a crucial role in the regulation of triglyceride metabolism and is required for the maintenance of normal plasma triglyceride concentrations. The chain is Cyclic AMP-responsive element-binding protein 3-like protein 3 (CREB3L3) from Homo sapiens (Human).